The chain runs to 116 residues: MRHQRRIPQLSLPADQRKALLRGLTTQLIREGRVTTTKARAKALRNETERMITLAKDGSLASRRRAIGYVYDKQLVHALFEKAQERYGDREGGYTRIVRTTPRRGDNSEMAIVELV.

This sequence belongs to the bacterial ribosomal protein bL17 family. In terms of assembly, part of the 50S ribosomal subunit. Contacts protein L32.

In Prochlorococcus marinus (strain NATL2A), this protein is Large ribosomal subunit protein bL17.